The chain runs to 183 residues: Threonylcarbamoyl-AMP synthase (183 aa).

A YrdC-like domain is found at 1 to 183 (MNREQIANAL…LRTNQLFRQG (183 aa)).

This sequence belongs to the SUA5 family. TsaC subfamily.

The protein localises to the cytoplasm. The catalysed reaction is L-threonine + hydrogencarbonate + ATP = L-threonylcarbamoyladenylate + diphosphate + H2O. Required for the formation of a threonylcarbamoyl group on adenosine at position 37 (t(6)A37) in tRNAs that read codons beginning with adenine. Catalyzes the conversion of L-threonine, HCO(3)(-)/CO(2) and ATP to give threonylcarbamoyl-AMP (TC-AMP) as the acyladenylate intermediate, with the release of diphosphate. This is Threonylcarbamoyl-AMP synthase from Haemophilus influenzae (strain PittEE).